The sequence spans 300 residues: GTPase Era (300 aa).

The 169-residue stretch at 8–176 folds into the Era-type G domain; sequence RCGYVAIVGR…ESLIASHLPE (169 aa). The segment at 16–23 is G1; that stretch reads GRPNVGKS. GTP is bound at residue 16–23; sequence GRPNVGKS. The segment at 42-46 is G2; it reads QTTRH. The segment at 63 to 66 is G3; it reads DTPG. Residues 63-67 and 125-128 contribute to the GTP site; these read DTPGM and NKTD. The G4 stretch occupies residues 125–128; that stretch reads NKTD. Residues 155 to 157 form a G5 region; it reads ISA. The region spanning 199 to 283 is the KH type-2 domain; that stretch reads VREKIMRQLG…MLNLWVKVKG (85 aa).

The protein belongs to the TRAFAC class TrmE-Era-EngA-EngB-Septin-like GTPase superfamily. Era GTPase family. In terms of assembly, monomer.

It localises to the cytoplasm. It is found in the cell inner membrane. An essential GTPase that binds both GDP and GTP, with rapid nucleotide exchange. Plays a role in 16S rRNA processing and 30S ribosomal subunit biogenesis and possibly also in cell cycle regulation and energy metabolism. The protein is GTPase Era of Pseudomonas savastanoi pv. phaseolicola (strain 1448A / Race 6) (Pseudomonas syringae pv. phaseolicola (strain 1448A / Race 6)).